The primary structure comprises 229 residues: Flavin-dependent thymidylate synthase (229 aa).

The region spanning Met-1–Phe-217 is the ThyX domain. Residues Thr-55, Arg-78–Arg-80, and Glu-86 each bind FAD. DUMP-binding positions include Gln-75 to Arg-78, Glu-86 to Arg-90, and Arg-156. A ThyX motif motif is present at residues Arg-78–Ser-88. FAD contacts are provided by residues Asn-172–Arg-174 and Asn-178. Arg-183 contributes to the dUMP binding site. Arg-183 (involved in ionization of N3 of dUMP, leading to its activation) is an active-site residue.

It belongs to the thymidylate synthase ThyX family. In terms of assembly, homotetramer. Requires FAD as cofactor.

The catalysed reaction is dUMP + (6R)-5,10-methylene-5,6,7,8-tetrahydrofolate + NADPH + H(+) = dTMP + (6S)-5,6,7,8-tetrahydrofolate + NADP(+). It functions in the pathway pyrimidine metabolism; dTTP biosynthesis. Its function is as follows. Catalyzes the reductive methylation of 2'-deoxyuridine-5'-monophosphate (dUMP) to 2'-deoxythymidine-5'-monophosphate (dTMP) while utilizing 5,10-methylenetetrahydrofolate (mTHF) as the methyl donor, and NADPH and FADH(2) as the reductant. The sequence is that of Flavin-dependent thymidylate synthase from Thermosipho melanesiensis (strain DSM 12029 / CIP 104789 / BI429).